A 289-amino-acid polypeptide reads, in one-letter code: MRHPDLPSSLTVPAAWQATLRLRFAQRGERTALTERRHQGPLLVQKPLYPEGGICHAVILHPPAGVAGGDSLDIDVTVEDGAHAVLATPGATKWYKSLGREAAQHVRLTVGAGARLDWLPQENIVFDDARARISTVLDVAPGGSAIGWDAVVLGRQASGEQWTRGALWLDTRVGTGERALWIEQSHLEAESPLRTAVAGLDGLNVLGTLWAVGEGATQELAEALAEQLPYTPELRAGVTCLATSGQSMLLLRVLGRQMEAVRHVMVDSWQALRMPIHGVAARPLRLWAT.

Belongs to the UreD family. In terms of assembly, ureD, UreF and UreG form a complex that acts as a GTP-hydrolysis-dependent molecular chaperone, activating the urease apoprotein by helping to assemble the nickel containing metallocenter of UreC. The UreE protein probably delivers the nickel.

Its subcellular location is the cytoplasm. In terms of biological role, required for maturation of urease via the functional incorporation of the urease nickel metallocenter. This Cupriavidus necator (strain ATCC 17699 / DSM 428 / KCTC 22496 / NCIMB 10442 / H16 / Stanier 337) (Ralstonia eutropha) protein is Urease accessory protein UreD.